A 499-amino-acid polypeptide reads, in one-letter code: Probable cytosol aminopeptidase (499 aa).

K269 and D274 together coordinate Mn(2+). The active site involves K281. Mn(2+)-binding residues include D292, D351, and E353. R355 is a catalytic residue.

The protein belongs to the peptidase M17 family. Mn(2+) serves as cofactor.

The protein resides in the cytoplasm. The enzyme catalyses Release of an N-terminal amino acid, Xaa-|-Yaa-, in which Xaa is preferably Leu, but may be other amino acids including Pro although not Arg or Lys, and Yaa may be Pro. Amino acid amides and methyl esters are also readily hydrolyzed, but rates on arylamides are exceedingly low.. It catalyses the reaction Release of an N-terminal amino acid, preferentially leucine, but not glutamic or aspartic acids.. Presumably involved in the processing and regular turnover of intracellular proteins. Catalyzes the removal of unsubstituted N-terminal amino acids from various peptides. This Haemophilus ducreyi (strain 35000HP / ATCC 700724) protein is Probable cytosol aminopeptidase.